A 398-amino-acid polypeptide reads, in one-letter code: 4-hydroxy-3-methylbut-2-enyl diphosphate reductase (398 aa).

Cysteine 66 contributes to the [4Fe-4S] cluster binding site. (2E)-4-hydroxy-3-methylbut-2-enyl diphosphate is bound at residue histidine 96. Dimethylallyl diphosphate is bound at residue histidine 96. Histidine 96 contributes to the isopentenyl diphosphate binding site. Cysteine 157 serves as a coordination point for [4Fe-4S] cluster. (2E)-4-hydroxy-3-methylbut-2-enyl diphosphate is bound at residue histidine 185. Histidine 185 serves as a coordination point for dimethylallyl diphosphate. Histidine 185 is a binding site for isopentenyl diphosphate. Glutamate 187 serves as the catalytic Proton donor. Threonine 250 contacts (2E)-4-hydroxy-3-methylbut-2-enyl diphosphate. Cysteine 288 is a binding site for [4Fe-4S] cluster. (2E)-4-hydroxy-3-methylbut-2-enyl diphosphate-binding residues include serine 317, serine 318, asparagine 319, and serine 379. The dimethylallyl diphosphate site is built by serine 317, serine 318, asparagine 319, and serine 379. Positions 317, 318, 319, and 379 each coordinate isopentenyl diphosphate.

The protein belongs to the IspH family. [4Fe-4S] cluster serves as cofactor.

It carries out the reaction isopentenyl diphosphate + 2 oxidized [2Fe-2S]-[ferredoxin] + H2O = (2E)-4-hydroxy-3-methylbut-2-enyl diphosphate + 2 reduced [2Fe-2S]-[ferredoxin] + 2 H(+). It catalyses the reaction dimethylallyl diphosphate + 2 oxidized [2Fe-2S]-[ferredoxin] + H2O = (2E)-4-hydroxy-3-methylbut-2-enyl diphosphate + 2 reduced [2Fe-2S]-[ferredoxin] + 2 H(+). The protein operates within isoprenoid biosynthesis; dimethylallyl diphosphate biosynthesis; dimethylallyl diphosphate from (2E)-4-hydroxy-3-methylbutenyl diphosphate: step 1/1. Its pathway is isoprenoid biosynthesis; isopentenyl diphosphate biosynthesis via DXP pathway; isopentenyl diphosphate from 1-deoxy-D-xylulose 5-phosphate: step 6/6. Its function is as follows. Catalyzes the conversion of 1-hydroxy-2-methyl-2-(E)-butenyl 4-diphosphate (HMBPP) into a mixture of isopentenyl diphosphate (IPP) and dimethylallyl diphosphate (DMAPP). Acts in the terminal step of the DOXP/MEP pathway for isoprenoid precursor biosynthesis. The polypeptide is 4-hydroxy-3-methylbut-2-enyl diphosphate reductase (Synechococcus sp. (strain ATCC 27144 / PCC 6301 / SAUG 1402/1) (Anacystis nidulans)).